A 633-amino-acid chain; its full sequence is GTPase-GDP dissociation stimulator BEM4 (633 aa).

In terms of assembly, interacts with CDC42; the interaction is direct. Interacts with RHO1; the interaction is direct. Interacts with RHO2. Interacts with RHO4. Interacts with CDC11.

It is found in the nucleus. It localises to the cytoplasm. Probably acts as a GEF (guanine nucleotide exchange factor) for the Rho family of small GTP-binding proteins (G proteins) that stimulates the dissociation of GDP to enable subsequent binding of GTP. May also chaperone the processing and/or trafficking of small GTPases independently of GEF activity. Involved in the control of polarized cell growth via CDC42-mediated signaling. Involved in the control of cell-wall organization via RHO1-mediated signaling. May also function via RHO2 and RHO4. This Saccharomyces cerevisiae (strain ATCC 204508 / S288c) (Baker's yeast) protein is GTPase-GDP dissociation stimulator BEM4.